Here is a 67-residue protein sequence, read N- to C-terminus: Probable Sec-independent protein translocase protein TatE (67 aa).

The helical transmembrane segment at 4–21 (ISITKLLVIAALVVLLFG) threads the bilayer. Positions 44–67 (NDDDTGAKTPAASEAPAERLSHKE) are disordered.

This sequence belongs to the TatA/E family. TatE subfamily.

Its subcellular location is the cell inner membrane. Part of the twin-arginine translocation (Tat) system that transports large folded proteins containing a characteristic twin-arginine motif in their signal peptide across membranes. TatE shares overlapping functions with TatA. The chain is Probable Sec-independent protein translocase protein TatE from Cronobacter sakazakii (strain ATCC BAA-894) (Enterobacter sakazakii).